Consider the following 196-residue polypeptide: Probable malonic semialdehyde reductase RutE (196 aa).

It belongs to the nitroreductase family. HadB/RutE subfamily. The cofactor is FMN.

It carries out the reaction 3-hydroxypropanoate + NADP(+) = 3-oxopropanoate + NADPH + H(+). Its function is as follows. May reduce toxic product malonic semialdehyde to 3-hydroxypropionic acid, which is excreted. This Yersinia enterocolitica serotype O:8 / biotype 1B (strain NCTC 13174 / 8081) protein is Probable malonic semialdehyde reductase RutE.